The sequence spans 171 residues: Tetratricopeptide repeat protein 9C (171 aa).

TPR repeat units follow at residues 8 to 41 (AQLY…LRGL), 72 to 107 (TDCY…QPEN), and 108 to 141 (AKAL…QPKD).

This sequence belongs to the TTC9 family.

The polypeptide is Tetratricopeptide repeat protein 9C (Ttc9c) (Rattus norvegicus (Rat)).